Reading from the N-terminus, the 158-residue chain is Transcriptional repressor NrdR (158 aa).

A zinc finger spans residues 3-34 (CPFCNSEETRVIDTRLTDDGHVVRRRRECEHC). The ATP-cone domain maps to 49–139 (IFVVKKGGQR…VYKEFRDLDH (91 aa)).

The protein belongs to the NrdR family. Zn(2+) serves as cofactor.

Its function is as follows. Negatively regulates transcription of bacterial ribonucleotide reductase nrd genes and operons by binding to NrdR-boxes. The sequence is that of Transcriptional repressor NrdR from Kosmotoga olearia (strain ATCC BAA-1733 / DSM 21960 / TBF 19.5.1).